The sequence spans 253 residues: Complement C1q subcomponent subunit B (253 aa).

Positions 1–27 (MMMKIPWGSIPVLMLLLLLGLIDISQA) are cleaved as a signal peptide. At Q28 the chain carries Pyrrolidone carboxylic acid. 4-hydroxyproline occurs at positions 35, 38, 41, 53, and 56. Collagen-like domains are found at residues 37-86 (IPGI…PGNP) and 60-114 (GEKG…GESG). The segment at 38–115 (PGIPGIPGTP…APGPKGESGD (78 aa)) is disordered. 5-hydroxylysine occurs at positions 59 and 62. A 4-hydroxyproline modification is found at P65. The segment covering 70–79 (DHGEFGEKGD) has biased composition (basic and acidic residues). At K77 the chain carries 5-hydroxylysine. Residues 80–92 (PGIPGNPGKVGPK) show a composition bias toward low complexity. P83 and P86 each carry 4-hydroxyproline. K92 and K98 each carry 5-hydroxylysine. Residues 96 to 105 (GPKGGPGAPG) are compositionally biased toward gly residues. Residues P101, P104, and P107 each carry the 4-hydroxyproline modification. K110 is modified (5-hydroxylysine). The C1q domain maps to 117–253 (KATQKIAFSA…GFLLFPDMEA (137 aa)). An intrachain disulfide couples C181 to C198. 3 residues coordinate Ca(2+): D199, Y200, and Q206.

Core component of the complement C1 complex, a calcium-dependent complex composed of 1 molecule of the C1Q subcomplex, 2 molecules of C1R and 2 molecules of C1S. The C1Q subcomplex is composed 18 subunits: 3 chains of C1QA, C1QB, and C1QC trimerize to form 6 collagen-like triple helices connected to six globular ligand-recognition modules (C1q domain). Post-translationally, hydroxylated on lysine and proline residues. Hydroxylated lysine residues can be glycosylated. Human C1Q contains up to 68.3 hydroxylysine-galactosylglucose residues and up to 2.5 hydroxylysine-galactose per molecule. Total percentage hydroxylysine residues glycosylated is 86.4%.

The protein localises to the secreted. It is found in the cell surface. The C1Q subcomplex is inhibited by sulfated molecules, such as triterpenoid sulfates, heparan sulfate, or chondroitin sulfates. In terms of biological role, core component of the complement C1 complex, a multiprotein complex that initiates the classical pathway of the complement system, a cascade of proteins that leads to phagocytosis and breakdown of pathogens and signaling that strengthens the adaptive immune system. The classical complement pathway is initiated by the C1Q subcomplex of the C1 complex, which specifically binds IgG or IgM immunoglobulins complexed with antigens, forming antigen-antibody complexes on the surface of pathogens: C1QA, together with C1QB and C1QC, specifically recognizes and binds the Fc regions of IgG or IgM via its C1q domain. Immunoglobulin-binding activates the proenzyme C1R, which cleaves C1S, initiating the proteolytic cascade of the complement system. The C1Q subcomplex is activated by a hexamer of IgG complexed with antigens, while it is activated by a pentameric IgM. The C1Q subcomplex also recognizes and binds phosphatidylserine exposed on the surface of cells undergoing programmed cell death, possibly promoting activation of the complement system. In Homo sapiens (Human), this protein is Complement C1q subcomponent subunit B.